Reading from the N-terminus, the 301-residue chain is Prohibitin-2 (301 aa).

Necessary for transcriptional repression stretches follow at residues 19–49 (MGTA…GHRA) and 150–174 (ASQL…RAKD). Positions 191–237 (REYTAAVESKQVAQQEAQRAQFLVEKAKQDQKQKIVQAEGEAAAAKM) form a coiled coil.

The protein belongs to the prohibitin family. The mitochondrial prohibitin complex consists of two subunits (PHB1 and PHB2), assembled into a membrane-associated ring-shaped supercomplex of approximately 1 mDa.

It localises to the mitochondrion inner membrane. The protein resides in the cytoplasm. The protein localises to the nucleus. Its subcellular location is the cell membrane. In terms of biological role, protein with pleiotropic attributes mediated in a cell-compartment- and tissue-specific manner, which include the plasma membrane-associated cell signaling functions, mitochondrial chaperone, and transcriptional co-regulator of transcription factors and sex steroid hormones in the nucleus. Functionally, in the mitochondria, together with PHB, forms large ring complexes (prohibitin complexes) in the inner mitochondrial membrane (IMM) and functions as a chaperone protein that stabilizes mitochondrial respiratory enzymes and maintains mitochondrial integrity in the IMM, which is required for mitochondrial morphogenesis, neuronal survival, and normal lifespan. In the nucleus, serves as transcriptional co-regulator. This is Prohibitin-2 (phb2) from Xenopus tropicalis (Western clawed frog).